Consider the following 42-residue polypeptide: Photosystem I reaction center subunit IX (42 aa).

Residues 7-27 (FLSSAPVLIMALLTFTAGILI) traverse the membrane as a helical segment.

This sequence belongs to the PsaJ family.

It localises to the cellular thylakoid membrane. Functionally, may help in the organization of the PsaE and PsaF subunits. The sequence is that of Photosystem I reaction center subunit IX from Microcystis aeruginosa (strain NIES-843 / IAM M-2473).